The following is a 293-amino-acid chain: ATP synthase subunit a (293 aa).

6 consecutive transmembrane segments (helical) span residues 40-60 (DSLF…WLAA), 97-117 (LFVA…NALD), 151-171 (DLNV…YYGI), 188-208 (FHAH…LNLI), 225-245 (MFAG…WTGF), and 264-284 (AIFH…LTLV).

The protein belongs to the ATPase A chain family. As to quaternary structure, F-type ATPases have 2 components, CF(1) - the catalytic core - and CF(0) - the membrane proton channel. CF(1) has five subunits: alpha(3), beta(3), gamma(1), delta(1), epsilon(1). CF(0) has three main subunits: a(1), b(2) and c(9-12). The alpha and beta chains form an alternating ring which encloses part of the gamma chain. CF(1) is attached to CF(0) by a central stalk formed by the gamma and epsilon chains, while a peripheral stalk is formed by the delta and b chains.

It localises to the cell inner membrane. Its function is as follows. Key component of the proton channel; it plays a direct role in the translocation of protons across the membrane. The chain is ATP synthase subunit a from Bordetella bronchiseptica (strain ATCC BAA-588 / NCTC 13252 / RB50) (Alcaligenes bronchisepticus).